The chain runs to 357 residues: Maleylacetate reductase 1 (357 aa).

The protein belongs to the iron-containing alcohol dehydrogenase family.

It catalyses the reaction 3-oxoadipate + NAD(+) = maleylacetate + NADH + H(+). The catalysed reaction is 3-oxoadipate + NADP(+) = maleylacetate + NADPH + H(+). The protein operates within aromatic compound metabolism; 3-chlorocatechol degradation. Functionally, plays a major role in the degradation of chloroaromatic compounds by channeling maleylacetate and some of its substituted derivatives into the 3-oxoadipate pathway. This enzyme converts maleylacetate and 2-chloromaleylacetate with similar efficiencies. This is Maleylacetate reductase 1 (macA) from Rhodococcus opacus (Nocardia opaca).